A 102-amino-acid chain; its full sequence is Protamine-2 (102 aa).

Disordered regions lie at residues 1 to 40 (MVRYRVRSPSEPSHEVYRQQLHGQEQGHHGQEEQGLSPEH) and 67 to 102 (HRQQHRSCRRRKRRSCRHRRKHRRGCRTRRRTCRRH). Phosphoserine occurs at positions 8, 10, and 37.

Belongs to the protamine P2 family. As to quaternary structure, interacts with TDRP. Proteolytic processing into mature chains is required for histone eviction during spermatogenesis. Transition proteins (TNP1 and TNP2) are required for processing. In terms of tissue distribution, testis.

The protein resides in the nucleus. Its subcellular location is the chromosome. Protamines substitute for histones in the chromatin of sperm during the haploid phase of spermatogenesis. They compact sperm DNA into a highly condensed, stable and inactive complex. The protein is Protamine-2 (PRM2) of Pan troglodytes (Chimpanzee).